We begin with the raw amino-acid sequence, 300 residues long: 33 kDa chaperonin (300 aa).

Disulfide bonds link C235–C237 and C269–C272.

This sequence belongs to the HSP33 family. Post-translationally, under oxidizing conditions two disulfide bonds are formed involving the reactive cysteines. Under reducing conditions zinc is bound to the reactive cysteines and the protein is inactive.

The protein resides in the cytoplasm. Redox regulated molecular chaperone. Protects both thermally unfolding and oxidatively damaged proteins from irreversible aggregation. Plays an important role in the bacterial defense system toward oxidative stress. The sequence is that of 33 kDa chaperonin from Pseudomonas syringae pv. syringae (strain B728a).